The sequence spans 470 residues: Methylenetetrahydrofolate--tRNA-(uracil-5-)-methyltransferase TrmFO (470 aa).

Position 10–15 (10–15) interacts with FAD; it reads GAGLAG.

It belongs to the MnmG family. TrmFO subfamily. Requires FAD as cofactor.

It is found in the cytoplasm. The catalysed reaction is uridine(54) in tRNA + (6R)-5,10-methylene-5,6,7,8-tetrahydrofolate + NADH + H(+) = 5-methyluridine(54) in tRNA + (6S)-5,6,7,8-tetrahydrofolate + NAD(+). It carries out the reaction uridine(54) in tRNA + (6R)-5,10-methylene-5,6,7,8-tetrahydrofolate + NADPH + H(+) = 5-methyluridine(54) in tRNA + (6S)-5,6,7,8-tetrahydrofolate + NADP(+). Its function is as follows. Catalyzes the folate-dependent formation of 5-methyl-uridine at position 54 (M-5-U54) in all tRNAs. The chain is Methylenetetrahydrofolate--tRNA-(uracil-5-)-methyltransferase TrmFO from Prochlorococcus marinus (strain MIT 9301).